The sequence spans 213 residues: MTDMSHQCVIVGIAGASASGKSLIASTLYRELREQVGDEHIGVIPEDSYYKDQSHLSMEERVKTNYDHPSSMDHSLLFQHLQMLKSGQPIELPVYSYVEHTRTPNTIHVEPKKVIILEGILLLTDARLRNELNFSIFVDTPLDICLMRRIKRDVNERGRSMDSVMAQYQKTVRPMFLQFIEPSKQYADIIVPRGGKNRIAIDILKAKISQFFE.

Residue 15-22 (GASASGKS) participates in ATP binding.

The protein belongs to the uridine kinase family.

It localises to the cytoplasm. The enzyme catalyses uridine + ATP = UMP + ADP + H(+). It catalyses the reaction cytidine + ATP = CMP + ADP + H(+). The protein operates within pyrimidine metabolism; CTP biosynthesis via salvage pathway; CTP from cytidine: step 1/3. Its pathway is pyrimidine metabolism; UMP biosynthesis via salvage pathway; UMP from uridine: step 1/1. This chain is Uridine kinase, found in Klebsiella pneumoniae (strain 342).